The primary structure comprises 346 residues: Cytosolic sulfotransferase 17 (346 aa).

89–94 contributes to the 3'-phosphoadenylyl sulfate binding site; the sequence is KTGTTW. The active-site Proton acceptor is the His-151. 3'-phosphoadenylyl sulfate is bound by residues Arg-173, Ser-181, Tyr-239, and 309 to 311; that span reads RKG.

The protein belongs to the sulfotransferase 1 family. As to expression, highly expressed in roots, stems and mature leaves. Low expression in young leaves and flowers. Barely detected in siliques.

The protein localises to the cytoplasm. The enzyme catalyses an aliphatic (Z)-desulfo-glucosinolate + 3'-phosphoadenylyl sulfate = a (Z)-omega-(methylsulfanyl)-N-sulfo-alkylhydroximate S-glucoside + adenosine 3',5'-bisphosphate + H(+). With respect to regulation, inhibited by phosphoadenosine 5'-phosphate (PAP). In terms of biological role, sulfotransferase that utilizes 3'-phospho-5'-adenylyl sulfate (PAPS) as sulfonate donor to catalyze the sulfate conjugation of desulfo-glucosinolates (dsGSs), the final step in the biosynthesis of the glucosinolate core structure. Substrate preference is desulfo-benzyl glucosinolate &gt; desulfo-6-methylthiohexyl glucosinolate. Increased specific activity with increasing chain length of desulfo-glucosinolate derived from methionine. Preferred substrate is desulfo-8-methylthiooctyl glucosinolate. This is Cytosolic sulfotransferase 17 (SOT17) from Arabidopsis thaliana (Mouse-ear cress).